The primary structure comprises 75 residues: Small ribosomal subunit protein bS18 (75 aa).

Belongs to the bacterial ribosomal protein bS18 family. In terms of assembly, part of the 30S ribosomal subunit. Forms a tight heterodimer with protein bS6.

In terms of biological role, binds as a heterodimer with protein bS6 to the central domain of the 16S rRNA, where it helps stabilize the platform of the 30S subunit. In Cereibacter sphaeroides (strain ATCC 17029 / ATH 2.4.9) (Rhodobacter sphaeroides), this protein is Small ribosomal subunit protein bS18.